The chain runs to 616 residues: Protein cereblon (616 aa).

Disordered regions lie at residues 1-39, 63-137, and 182-220; these read MDEE…DDSV, FGPS…AMPR, and SQER…DIDM. A compositionally biased stretch (low complexity) spans 11–32; sequence AQEQEVAGSAGEAAAGPSGAEV. Over residues 96 to 107 the composition is skewed to acidic residues; sequence SEEDIVLDDGTE. Residues 183-192 are compositionally biased toward basic and acidic residues; it reads QERRRSRNSD. The segment covering 194–203 has biased composition (acidic residues); the sequence is VSPEAEDDEL. Positions 206–215 are enriched in pro residues; that stretch reads HPPPPPPRPP. Residues 257-482 form the Lon N-terminal domain; the sequence is HMLIFLHQYI…LIGGILKEET (226 aa). A CULT domain is found at 481 to 590; sequence ETLFYCRYCN…LAGSSVRIGK (110 aa). Zn(2+)-binding residues include C486, C489, C555, and C558.

It belongs to the CRBN family. Likely a component of a DCX (DDB1-CUL4-X-box) protein ligase complex. May interact with pic/DDB1. In terms of processing, ubiquitinated.

It is found in the nucleus. It participates in protein modification; protein ubiquitination. Its function is as follows. Substrate recognition component of a DCX (DDB1-CUL4-X-box) E3 protein ligase complex that mediates the ubiquitination and subsequent proteasomal degradation of target proteins. Has an essential role in mediating growth by negatively regulating insulin signaling. It also has a role in maintaining presynaptic function in the neuromuscular junction synapses of third-instar larvae. The chain is Protein cereblon from Drosophila pseudoobscura pseudoobscura (Fruit fly).